We begin with the raw amino-acid sequence, 164 residues long: Phosphopantetheine adenylyltransferase (164 aa).

S9 is a binding site for substrate. ATP-binding positions include 9–10 (SF) and H17. Substrate is bound by residues K41, L73, and K87. ATP-binding positions include 88–90 (GLR), E98, and 123–129 (YSYLSSS).

Belongs to the bacterial CoaD family. In terms of assembly, homohexamer. Mg(2+) serves as cofactor.

Its subcellular location is the cytoplasm. The catalysed reaction is (R)-4'-phosphopantetheine + ATP + H(+) = 3'-dephospho-CoA + diphosphate. It participates in cofactor biosynthesis; coenzyme A biosynthesis; CoA from (R)-pantothenate: step 4/5. Reversibly transfers an adenylyl group from ATP to 4'-phosphopantetheine, yielding dephospho-CoA (dPCoA) and pyrophosphate. The polypeptide is Phosphopantetheine adenylyltransferase (Clostridium botulinum (strain Okra / Type B1)).